A 405-amino-acid chain; its full sequence is Na(+)-translocating NADH-quinone reductase subunit F (405 aa).

A helical membrane pass occupies residues 3 to 23 (IILGIVMFTVIVLALALMILF). The region spanning 32–124 (GDITIKVNDE…DMDIEVPEEV (93 aa)) is the 2Fe-2S ferredoxin-type domain. Residues Cys-67, Cys-73, Cys-76, and Cys-108 each contribute to the [2Fe-2S] cluster site. Positions 127–267 (VKKWECTVIS…SGPFGEFFAK (141 aa)) constitute an FAD-binding FR-type domain.

It belongs to the NqrF family. Composed of six subunits; NqrA, NqrB, NqrC, NqrD, NqrE and NqrF. Requires [2Fe-2S] cluster as cofactor. It depends on FAD as a cofactor.

The protein localises to the cell inner membrane. It catalyses the reaction a ubiquinone + n Na(+)(in) + NADH + H(+) = a ubiquinol + n Na(+)(out) + NAD(+). NQR complex catalyzes the reduction of ubiquinone-1 to ubiquinol by two successive reactions, coupled with the transport of Na(+) ions from the cytoplasm to the periplasm. The first step is catalyzed by NqrF, which accepts electrons from NADH and reduces ubiquinone-1 to ubisemiquinone by a one-electron transfer pathway. The protein is Na(+)-translocating NADH-quinone reductase subunit F of Neisseria gonorrhoeae (strain ATCC 700825 / FA 1090).